A 480-amino-acid chain; its full sequence is UDP-N-acetylmuramate--L-alanine ligase (480 aa).

Residue 122–128 (GTHGKTT) participates in ATP binding.

This sequence belongs to the MurCDEF family.

The protein resides in the cytoplasm. The enzyme catalyses UDP-N-acetyl-alpha-D-muramate + L-alanine + ATP = UDP-N-acetyl-alpha-D-muramoyl-L-alanine + ADP + phosphate + H(+). The protein operates within cell wall biogenesis; peptidoglycan biosynthesis. In terms of biological role, cell wall formation. This chain is UDP-N-acetylmuramate--L-alanine ligase, found in Pseudomonas paraeruginosa (strain DSM 24068 / PA7) (Pseudomonas aeruginosa (strain PA7)).